Consider the following 416-residue polypeptide: Hepatic and glial cell adhesion molecule (416 aa).

Residues Met-1 to Gly-33 form the signal peptide. Positions Val-34–Asp-142 constitute an Ig-like V-type domain. Over Val-34 to Ser-240 the chain is Extracellular. N-linked (GlcNAc...) asparagine glycans are attached at residues Asn-35, Asn-138, Asn-167, and Asn-189. Positions Pro-148–Thr-234 constitute an Ig-like C2-type domain. Cys-168 and Cys-217 are disulfide-bonded. A helical membrane pass occupies residues Leu-241–Ala-261. At Cys-262–Ala-416 the chain is on the cytoplasmic side. Positions Leu-273–Ala-416 are disordered. Ser-278 is modified (phosphoserine). Over residues Asn-285–Asn-306 the composition is skewed to basic and acidic residues. Phosphoserine occurs at positions 350 and 377. The segment covering Ser-383–Ala-398 has biased composition (low complexity).

Homodimer. Dimer formation occurs predominantly through cis interactions on the cell surface. Part of a complex containing MLC1, TRPV4, AQP4 and ATP1B1. Interacts with CLCN2. In terms of processing, N-glycosylated.

It is found in the cytoplasm. It localises to the cell membrane. Involved in regulating cell motility and cell-matrix interactions. May inhibit cell growth through suppression of cell proliferation. In glia, associates and targets CLCN2 at astrocytic processes and myelinated fiber tracts where it may regulate transcellular chloride flux involved in neuron excitability. The sequence is that of Hepatic and glial cell adhesion molecule from Homo sapiens (Human).